The sequence spans 105 residues: Intracellular chorismate mutase (105 aa).

In terms of domain architecture, Chorismate mutase spans Ser-23–His-105. Positions 61, 70, and 74 each coordinate chorismate.

In terms of assembly, homodimer. Interacts with AroG.

It localises to the cytoplasm. It catalyses the reaction chorismate = prephenate. It participates in metabolic intermediate biosynthesis; prephenate biosynthesis; prephenate from chorismate: step 1/1. Its activity is regulated as follows. The formation of the complex with AroG activates the chorismate mutase activity. In terms of biological role, catalyzes the Claisen rearrangement of chorismate to prephenate. Probably involved in the aromatic amino acid biosynthesis. The sequence is that of Intracellular chorismate mutase from Mycobacterium bovis (strain ATCC BAA-935 / AF2122/97).